The chain runs to 426 residues: 26S proteasome regulatory subunit 7 homolog A (426 aa).

Residue 209 to 216 (GPPGTGKT) participates in ATP binding. Glycyl lysine isopeptide (Lys-Gly) (interchain with G-Cter in ubiquitin) cross-links involve residues K400 and K415.

Belongs to the AAA ATPase family. In terms of assembly, component of the 19S regulatory particle (RP/PA700) base subcomplex of the 26S proteasome. The 26S proteasome is composed of a core protease (CP), known as the 20S proteasome, capped at one or both ends by the 19S regulatory particle (RP/PA700). The RP/PA700 complex is composed of at least 17 different subunits in two subcomplexes, the base and the lid, which form the portions proximal and distal to the 20S proteolytic core, respectively.

It localises to the cytoplasm. The protein resides in the nucleus. The 26S proteasome is involved in the ATP-dependent degradation of ubiquitinated proteins. The regulatory (or ATPase) complex confers ATP dependency and substrate specificity to the 26S complex. The polypeptide is 26S proteasome regulatory subunit 7 homolog A (RPT1A) (Arabidopsis thaliana (Mouse-ear cress)).